The sequence spans 499 residues: Glutelin type-B 1 (499 aa).

The first 24 residues, 1 to 24 (MASSVFSRFSIYFCVLLLCHGSMA), serve as a signal peptide directing secretion. 2 cysteine pairs are disulfide-bonded: Cys-45–Cys-78 and Cys-121–Cys-309. Cupin type-1 domains are found at residues 50-247 (LQAF…VAAK) and 315-464 (VNIE…EQAR). The disordered stretch occupies residues 467–499 (KNNRGEEHGAFTPRFQQQYYPGLSNESESETSE).

It belongs to the 11S seed storage protein (globulins) family. Hexamer; each subunit is composed of an acidic and a basic chain derived from a single precursor and linked by a disulfide bond.

In terms of biological role, seed storage protein. In Oryza sativa subsp. japonica (Rice), this protein is Glutelin type-B 1 (GluB1-A).